Reading from the N-terminus, the 307-residue chain is Ubiquinol oxidase subunit 2 (307 aa).

The signal sequence occupies residues 1–23 (MKNKLLARVARLGGLSSALLLAG). Cys-24 carries the N-palmitoyl cysteine lipid modification. Cys-24 carries the S-diacylglycerol cysteine lipid modification. The next 2 membrane-spanning stretches (helical) occupy residues 46–66 (STVAMLIVVIPTILETLLFAW) and 87–107 (IEVTIWGVPSLIILFLAVITY).

Belongs to the cytochrome c oxidase subunit 2 family. In terms of assembly, heterotetramer of the subunits 1, 2, 3 and 4.

The protein resides in the cell membrane. In Acetobacter aceti, this protein is Ubiquinol oxidase subunit 2 (cyaB).